The primary structure comprises 131 residues: Small ribosomal subunit protein uS8 (131 aa).

Belongs to the universal ribosomal protein uS8 family. As to quaternary structure, part of the 30S ribosomal subunit. Contacts proteins S5 and S12.

Functionally, one of the primary rRNA binding proteins, it binds directly to 16S rRNA central domain where it helps coordinate assembly of the platform of the 30S subunit. In Campylobacter lari (strain RM2100 / D67 / ATCC BAA-1060), this protein is Small ribosomal subunit protein uS8.